The sequence spans 358 residues: ATPase ASNA1 homolog (358 aa).

Residue 35 to 42 (KGGVGKTT) participates in ATP binding. D64 is an active-site residue. Residues E235 and N262 each coordinate ATP.

It belongs to the arsA ATPase family. In terms of assembly, homodimer.

The protein localises to the cytoplasm. It is found in the endoplasmic reticulum. In terms of biological role, ATPase required for the post-translational delivery of tail-anchored (TA) proteins to the endoplasmic reticulum. Recognizes and selectively binds the transmembrane domain of TA proteins in the cytosol. This complex then targets to the endoplasmic reticulum by membrane-bound receptors, where the tail-anchored protein is released for insertion. This process is regulated by ATP binding and hydrolysis. ATP binding drives the homodimer towards the closed dimer state, facilitating recognition of newly synthesized TA membrane proteins. ATP hydrolysis is required for insertion. Subsequently, the homodimer reverts towards the open dimer state, lowering its affinity for the membrane-bound receptor, and returning it to the cytosol to initiate a new round of targeting. In Babesia bovis, this protein is ATPase ASNA1 homolog.